Consider the following 152-residue polypeptide: Ribosome maturation factor RimP (152 aa).

This sequence belongs to the RimP family.

It localises to the cytoplasm. Its function is as follows. Required for maturation of 30S ribosomal subunits. This chain is Ribosome maturation factor RimP, found in Yersinia pestis.